Here is a 97-residue protein sequence, read N- to C-terminus: Lipolysis-activating peptide 1-alpha chain (97 aa).

The first 21 residues, 1 to 21 (MNIMLFCSVFILVSLTGLSVS), serve as a signal peptide directing secretion. Residues 25–88 (PGNYPMSLYG…FWAAHKNHCK (64 aa)) enclose the LCN-type CS-alpha/beta domain. Disulfide bonds link cysteine 39-cysteine 62, cysteine 48-cysteine 67, and cysteine 52-cysteine 69.

It belongs to the long (3 C-C) scorpion toxin superfamily. In terms of assembly, monomer (edited version) and heterodimer (non-edited version) of this alpha chain and a beta chain (AC P0CI43). As to expression, expressed by the venom gland.

Its subcellular location is the secreted. Functionally, the heterodimer non-edited LVP1 induces lipolysis in rat adipocytes. Induction of lipolysis by LVP1 appears to be mediated through the beta-2 adrenergic receptor pathway (ADRB2). Its function is as follows. The edited BmKBTx-like, similar to beta-toxins, may modulate voltage-gated sodium channels (Nav) and may block voltage-gated potassium channels (Kv). In Lychas mucronatus (Chinese swimming scorpion), this protein is Lipolysis-activating peptide 1-alpha chain.